Reading from the N-terminus, the 213-residue chain is Pyridoxine/pyridoxamine 5'-phosphate oxidase (213 aa).

Substrate contacts are provided by residues 8 to 11 (RQEY) and Lys66. FMN is bound by residues 61 to 66 (RTVLLK), 76 to 77 (YT), Arg82, Lys83, and Gln105. Positions 123, 127, and 131 each coordinate substrate. FMN contacts are provided by residues 140–141 (QS) and Trp185. 191-193 (RLH) is a substrate binding site. FMN is bound at residue Arg195.

Belongs to the pyridoxamine 5'-phosphate oxidase family. Homodimer. Requires FMN as cofactor.

It carries out the reaction pyridoxamine 5'-phosphate + O2 + H2O = pyridoxal 5'-phosphate + H2O2 + NH4(+). The catalysed reaction is pyridoxine 5'-phosphate + O2 = pyridoxal 5'-phosphate + H2O2. It functions in the pathway cofactor metabolism; pyridoxal 5'-phosphate salvage; pyridoxal 5'-phosphate from pyridoxamine 5'-phosphate: step 1/1. The protein operates within cofactor metabolism; pyridoxal 5'-phosphate salvage; pyridoxal 5'-phosphate from pyridoxine 5'-phosphate: step 1/1. Catalyzes the oxidation of either pyridoxine 5'-phosphate (PNP) or pyridoxamine 5'-phosphate (PMP) into pyridoxal 5'-phosphate (PLP). This chain is Pyridoxine/pyridoxamine 5'-phosphate oxidase, found in Bacteroides thetaiotaomicron (strain ATCC 29148 / DSM 2079 / JCM 5827 / CCUG 10774 / NCTC 10582 / VPI-5482 / E50).